A 300-amino-acid chain; its full sequence is Acetaldehyde dehydrogenase (300 aa).

NAD(+) is bound at residue 10–13 (SGNI). Cysteine 129 serves as the catalytic Acyl-thioester intermediate. Residues 160 to 168 (SAGPGTRKN) and asparagine 271 each bind NAD(+).

Belongs to the acetaldehyde dehydrogenase family.

The enzyme catalyses acetaldehyde + NAD(+) + CoA = acetyl-CoA + NADH + H(+). This Alkalilimnicola ehrlichii (strain ATCC BAA-1101 / DSM 17681 / MLHE-1) protein is Acetaldehyde dehydrogenase.